Consider the following 112-residue polypeptide: 2Fe-2S ferredoxin (112 aa).

The 2Fe-2S ferredoxin-type domain maps to 5 to 107; it reads IKVTFIINDG…GIKVHLPAAT (103 aa). [2Fe-2S] cluster-binding residues include Cys-42, Cys-48, Cys-51, and Cys-88.

This sequence belongs to the adrenodoxin/putidaredoxin family. Requires [2Fe-2S] cluster as cofactor.

Its function is as follows. Ferredoxin are iron-sulfur proteins that transfer electrons in a wide variety of metabolic reactions. This chain is 2Fe-2S ferredoxin (fdxB), found in Rickettsia rickettsii.